The chain runs to 172 residues: Avenin-like a4 (172 aa).

Positions 1-19 (MKTMFILALIALAATSVVA) are cleaved as a signal peptide.

It belongs to the prolamin family. Contains 7 disulfide bonds.

In terms of biological role, seed storage protein. Not integrated in the gluten polymer through disulfide bonds, unless incorporated by reduction and reoxidation during dough making. Increases dough strength and bread volume, but decreases dough stability when added into a base wheat flour. This chain is Avenin-like a4, found in Triticum aestivum (Wheat).